The following is a 160-amino-acid chain: Cyanate hydratase (160 aa).

Residues R100, E103, and S126 contribute to the active site.

The protein belongs to the cyanase family.

It carries out the reaction cyanate + hydrogencarbonate + 3 H(+) = NH4(+) + 2 CO2. Functionally, catalyzes the reaction of cyanate with bicarbonate to produce ammonia and carbon dioxide. The chain is Cyanate hydratase from Aspergillus flavus (strain ATCC 200026 / FGSC A1120 / IAM 13836 / NRRL 3357 / JCM 12722 / SRRC 167).